Reading from the N-terminus, the 339-residue chain is Ketol-acid reductoisomerase (NADP(+)) (339 aa).

Residues 1-182 enclose the KARI N-terminal Rossmann domain; the sequence is MRVYYDRDAD…GGGRAGIIET (182 aa). NADP(+)-binding positions include 24–27, Arg48, Ser51, Thr53, and 83–86; these read YGSQ and DELQ. His108 is an active-site residue. Residue Gly134 participates in NADP(+) binding. The KARI C-terminal knotted domain occupies 183 to 328; sequence TFKEECETDL…AKLRGMMPWI (146 aa). Positions 191, 195, 227, and 231 each coordinate Mg(2+). Residue Ser252 coordinates substrate.

This sequence belongs to the ketol-acid reductoisomerase family. Mg(2+) is required as a cofactor.

It carries out the reaction (2R)-2,3-dihydroxy-3-methylbutanoate + NADP(+) = (2S)-2-acetolactate + NADPH + H(+). It catalyses the reaction (2R,3R)-2,3-dihydroxy-3-methylpentanoate + NADP(+) = (S)-2-ethyl-2-hydroxy-3-oxobutanoate + NADPH + H(+). It functions in the pathway amino-acid biosynthesis; L-isoleucine biosynthesis; L-isoleucine from 2-oxobutanoate: step 2/4. The protein operates within amino-acid biosynthesis; L-valine biosynthesis; L-valine from pyruvate: step 2/4. In terms of biological role, involved in the biosynthesis of branched-chain amino acids (BCAA). Catalyzes an alkyl-migration followed by a ketol-acid reduction of (S)-2-acetolactate (S2AL) to yield (R)-2,3-dihydroxy-isovalerate. In the isomerase reaction, S2AL is rearranged via a Mg-dependent methyl migration to produce 3-hydroxy-3-methyl-2-ketobutyrate (HMKB). In the reductase reaction, this 2-ketoacid undergoes a metal-dependent reduction by NADPH to yield (R)-2,3-dihydroxy-isovalerate. The polypeptide is Ketol-acid reductoisomerase (NADP(+)) (Methylorubrum extorquens (strain CM4 / NCIMB 13688) (Methylobacterium extorquens)).